A 474-amino-acid chain; its full sequence is Gamma-aminobutyric acid receptor subunit beta-1 (474 aa).

An N-terminal signal peptide occupies residues 1-25; the sequence is MWTVQNRESLGLLSFPVMITMVCCA. The Extracellular portion of the chain corresponds to 26–245; sequence HSTNEPSNMS…SFRLKRNIGY (220 aa). Asn-105 is a glycosylation site (N-linked (GlcNAc...) asparagine). Residue Tyr-122 participates in histamine binding. A disulfide bond links Cys-161 and Cys-175. Asn-174 carries N-linked (GlcNAc...) asparagine glycosylation. Histamine is bound by residues 181 to 182 and Thr-227; that span reads SY. Tyr-182 and Thr-227 together coordinate 4-aminobutanoate. Transmembrane regions (helical) follow at residues 246 to 267, 271 to 293, and 305 to 327; these read FILQ…SFWI, ASAA…STHL, and AIDI…YAFV. Over 328–451 the chain is Cytoplasmic; that stretch reads NYIFFGKGPQ…DLTDVNSIDK (124 aa). Residues 452–473 traverse the membrane as a helical segment; it reads WSRMFFPITFSLFNVVYWLYYV.

It belongs to the ligand-gated ion channel (TC 1.A.9) family. Gamma-aminobutyric acid receptor (TC 1.A.9.5) subfamily. GABRB1 sub-subfamily. In terms of assembly, heteropentamer, formed by a combination of alpha (GABRA1-6), beta (GABRB1-3), gamma (GABRG1-3), delta (GABRD), epsilon (GABRE), rho (GABRR1-3), pi (GABRP) and theta (GABRQ) chains, each subunit exhibiting distinct physiological and pharmacological properties. Binds UBQLN1.

Its subcellular location is the postsynaptic cell membrane. The protein resides in the cell membrane. The enzyme catalyses chloride(in) = chloride(out). With respect to regulation, potentiated by etomidate, propofol, pregnanolone and flurazepam. Potentiated by histamine. In terms of biological role, beta subunit of the heteropentameric ligand-gated chloride channel gated by gamma-aminobutyric acid (GABA), a major inhibitory neurotransmitter in the brain. GABA-gated chloride channels, also named GABA(A) receptors (GABAAR), consist of five subunits arranged around a central pore and contain one or two GABA active binding sites located at the alpha and beta subunit interfaces, depending on subunit composition. When activated by GABA, GABAARs selectively allow the flow of chloride anions across the cell membrane down their electrochemical gradient. Chloride influx into the postsynaptic neuron following GABAAR opening decreases the neuron ability to generate a new action potential, thereby reducing nerve transmission. Beta-containing GABAARs can simultaneously bind GABA and histamine where histamine binds at the interface of two neighboring beta subunits, which may be involved in the regulation of sleep and wakefulness. This is Gamma-aminobutyric acid receptor subunit beta-1 from Homo sapiens (Human).